Consider the following 410-residue polypeptide: Probable peptidoglycan glycosyltransferase FtsW (410 aa).

The next 9 helical transmembrane spans lie at 39 to 59 (LDPL…VMVY), 78 to 98 (YFLL…LAAF), 108 to 128 (FAPW…IPGV), 177 to 197 (GFLP…GEPD), 198 to 218 (FGAF…GGIN), 221 to 241 (VFAL…WLSP), 303 to 323 (IAEE…AILI), 342 to 362 (GLVA…NMGV), and 374 to 394 (LPLM…LAIL).

It belongs to the SEDS family. FtsW subfamily.

The protein resides in the cell inner membrane. The enzyme catalyses [GlcNAc-(1-&gt;4)-Mur2Ac(oyl-L-Ala-gamma-D-Glu-L-Lys-D-Ala-D-Ala)](n)-di-trans,octa-cis-undecaprenyl diphosphate + beta-D-GlcNAc-(1-&gt;4)-Mur2Ac(oyl-L-Ala-gamma-D-Glu-L-Lys-D-Ala-D-Ala)-di-trans,octa-cis-undecaprenyl diphosphate = [GlcNAc-(1-&gt;4)-Mur2Ac(oyl-L-Ala-gamma-D-Glu-L-Lys-D-Ala-D-Ala)](n+1)-di-trans,octa-cis-undecaprenyl diphosphate + di-trans,octa-cis-undecaprenyl diphosphate + H(+). It participates in cell wall biogenesis; peptidoglycan biosynthesis. Functionally, peptidoglycan polymerase that is essential for cell division. This Aromatoleum aromaticum (strain DSM 19018 / LMG 30748 / EbN1) (Azoarcus sp. (strain EbN1)) protein is Probable peptidoglycan glycosyltransferase FtsW.